The primary structure comprises 108 residues: UPF0060 membrane protein YnfA (108 aa).

The Periplasmic portion of the chain corresponds to 1 to 5 (MLKTT). A helical membrane pass occupies residues 6–26 (LLFFVTALCEIIGCFLPWLWI). At 27-30 (KRGA) the chain is on the cytoplasmic side. A helical membrane pass occupies residues 31 to 51 (SVWWLLPAAASLALFVWLLTL). The Periplasmic portion of the chain corresponds to 52–60 (HPAASGRVY). A helical transmembrane segment spans residues 61 to 81 (AAYGGVYVCTALLWLRVVDGV). Residues 82–84 (RLT) lie on the Cytoplasmic side of the membrane. The chain crosses the membrane as a helical span at residues 85–105 (VYDWCGALIALCGMLIIVVGW). Topologically, residues 106–108 (GRT) are periplasmic.

It belongs to the UPF0060 family.

The protein localises to the cell inner membrane. This Salmonella paratyphi A (strain ATCC 9150 / SARB42) protein is UPF0060 membrane protein YnfA.